Consider the following 81-residue polypeptide: Polcalcin Syr v 3 (81 aa).

EF-hand domains lie at 3–38 and 41–73; these read EEVA…LGSV and EEIQ…NSGL. Ca(2+)-binding residues include Asp16, Asn18, Asp20, Lys22, Glu27, Asp51, Asp53, Asp55, and Glu62.

The protein is Polcalcin Syr v 3 (SYRV3) of Syringa vulgaris (Common lilac).